The chain runs to 484 residues: Xylulose kinase (484 aa).

Met-77–His-78 serves as a coordination point for substrate. The active-site Proton acceptor is the Asp-233.

This sequence belongs to the FGGY kinase family. In terms of assembly, homodimer.

It catalyses the reaction D-xylulose + ATP = D-xylulose 5-phosphate + ADP + H(+). The enzyme catalyses 1-deoxy-D-xylulose + ATP = 1-deoxy-D-xylulose 5-phosphate + ADP + H(+). Its activity is regulated as follows. Sugar binding is accompanied by a dramatic hinge-bending movement that enhances interactions with Mg-ATP. Its function is as follows. Catalyzes the phosphorylation of D-xylulose to D-xylulose 5-phosphate. Also catalyzes the phosphorylation of 1-deoxy-D-xylulose to 1-deoxy-D-xylulose 5-phosphate, with lower efficiency. Can also use D-ribulose, xylitol and D-arabitol, but D-xylulose is preferred over the other substrates. Has a weak substrate-independent Mg-ATP-hydrolyzing activity. This is Xylulose kinase from Escherichia coli (strain K12).